The primary structure comprises 389 residues: S-adenosylmethionine synthase (389 aa).

His-17 contacts ATP. A Mg(2+)-binding site is contributed by Asp-19. Residue Glu-45 coordinates K(+). Positions 58 and 101 each coordinate L-methionine. The flexible loop stretch occupies residues 101–111 (QSPDIAQGVTE). Residues 168–170 (DSK), 234–235 (RF), Asp-243, 249–250 (RK), Ala-266, and Lys-270 contribute to the ATP site. Asp-243 contributes to the L-methionine binding site. Lys-274 serves as a coordination point for L-methionine.

The protein belongs to the AdoMet synthase family. Homotetramer; dimer of dimers. Mg(2+) serves as cofactor. K(+) is required as a cofactor.

Its subcellular location is the cytoplasm. The catalysed reaction is L-methionine + ATP + H2O = S-adenosyl-L-methionine + phosphate + diphosphate. It participates in amino-acid biosynthesis; S-adenosyl-L-methionine biosynthesis; S-adenosyl-L-methionine from L-methionine: step 1/1. Functionally, catalyzes the formation of S-adenosylmethionine (AdoMet) from methionine and ATP. The overall synthetic reaction is composed of two sequential steps, AdoMet formation and the subsequent tripolyphosphate hydrolysis which occurs prior to release of AdoMet from the enzyme. The protein is S-adenosylmethionine synthase of Geobacter sp. (strain M21).